A 24-amino-acid chain; its full sequence is Cytochrome c oxidase subunit 5A-2, mitochondrial (24 aa).

Belongs to the cytochrome c oxidase subunit 5A family. Component of the cytochrome c oxidase (complex IV, CIV), a multisubunit enzyme composed of 14 subunits. The complex is composed of a catalytic core of 3 subunits MT-CO1, MT-CO2 and MT-CO3, encoded in the mitochondrial DNA, and 11 supernumerary subunits COX4I, COX5A, COX5B, COX6A, COX6B, COX6C, COX7A, COX7B, COX7C, COX8 and NDUFA4, which are encoded in the nuclear genome. The complex exists as a monomer or a dimer and forms supercomplexes (SCs) in the inner mitochondrial membrane with NADH-ubiquinone oxidoreductase (complex I, CI) and ubiquinol-cytochrome c oxidoreductase (cytochrome b-c1 complex, complex III, CIII), resulting in different assemblies (supercomplex SCI(1)III(2)IV(1) and megacomplex MCI(2)III(2)IV(2)).

It is found in the mitochondrion inner membrane. It functions in the pathway energy metabolism; oxidative phosphorylation. In terms of biological role, component of the cytochrome c oxidase, the last enzyme in the mitochondrial electron transport chain which drives oxidative phosphorylation. The respiratory chain contains 3 multisubunit complexes succinate dehydrogenase (complex II, CII), ubiquinol-cytochrome c oxidoreductase (cytochrome b-c1 complex, complex III, CIII) and cytochrome c oxidase (complex IV, CIV), that cooperate to transfer electrons derived from NADH and succinate to molecular oxygen, creating an electrochemical gradient over the inner membrane that drives transmembrane transport and the ATP synthase. Cytochrome c oxidase is the component of the respiratory chain that catalyzes the reduction of oxygen to water. Electrons originating from reduced cytochrome c in the intermembrane space (IMS) are transferred via the dinuclear copper A center (CU(A)) of subunit 2 and heme A of subunit 1 to the active site in subunit 1, a binuclear center (BNC) formed by heme A3 and copper B (CU(B)). The BNC reduces molecular oxygen to 2 water molecules using 4 electrons from cytochrome c in the IMS and 4 protons from the mitochondrial matrix. This chain is Cytochrome c oxidase subunit 5A-2, mitochondrial, found in Thunnus obesus (Bigeye tuna).